Consider the following 199-residue polypeptide: RNA pyrophosphohydrolase (199 aa).

Residues 6–154 (GYRPNVGIVL…KREVYELALS (149 aa)) form the Nudix hydrolase domain. The Nudix box motif lies at 38–59 (GGIQHGESPEQAMYRELHEEVG).

Belongs to the Nudix hydrolase family. RppH subfamily. It depends on a divalent metal cation as a cofactor.

Accelerates the degradation of transcripts by removing pyrophosphate from the 5'-end of triphosphorylated RNA, leading to a more labile monophosphorylated state that can stimulate subsequent ribonuclease cleavage. The polypeptide is RNA pyrophosphohydrolase (Polynucleobacter asymbioticus (strain DSM 18221 / CIP 109841 / QLW-P1DMWA-1) (Polynucleobacter necessarius subsp. asymbioticus)).